Here is a 289-residue protein sequence, read N- to C-terminus: Ribonuclease H2 subunit A (289 aa).

One can recognise an RNase H type-2 domain in the interval 20 to 249; that stretch reads PFVMGIDEAG…TETAMRGACF (230 aa). The a divalent metal cation site is built by D26, E27, and D134.

Belongs to the RNase HII family. Eukaryotic subfamily. Mn(2+) serves as cofactor. It depends on Mg(2+) as a cofactor.

It carries out the reaction Endonucleolytic cleavage to 5'-phosphomonoester.. Functionally, endonuclease that specifically degrades the RNA of RNA-DNA hybrids. Participates in DNA replication. This chain is Ribonuclease H2 subunit A (rnaseh2A), found in Dictyostelium discoideum (Social amoeba).